A 429-amino-acid chain; its full sequence is Phosphoribosylamine--glycine ligase (429 aa).

The ATP-grasp domain occupies 108–315 (KDFLARHRIP…LVLLVEAALA (208 aa)). 134-195 (LHEQGAPIVI…EEFLDGEEAS (62 aa)) provides a ligand contact to ATP. Glu285 and Asn287 together coordinate Mg(2+).

Belongs to the GARS family. The cofactor is Mg(2+). It depends on Mn(2+) as a cofactor.

It catalyses the reaction 5-phospho-beta-D-ribosylamine + glycine + ATP = N(1)-(5-phospho-beta-D-ribosyl)glycinamide + ADP + phosphate + H(+). It functions in the pathway purine metabolism; IMP biosynthesis via de novo pathway; N(1)-(5-phospho-D-ribosyl)glycinamide from 5-phospho-alpha-D-ribose 1-diphosphate: step 2/2. The protein is Phosphoribosylamine--glycine ligase of Pseudomonas aeruginosa (strain ATCC 15692 / DSM 22644 / CIP 104116 / JCM 14847 / LMG 12228 / 1C / PRS 101 / PAO1).